The chain runs to 493 residues: Glutamyl-tRNA(Gln) amidotransferase subunit A (493 aa).

Catalysis depends on charge relay system residues lysine 79 and serine 159. The active-site Acyl-ester intermediate is serine 183.

Belongs to the amidase family. GatA subfamily. As to quaternary structure, heterotrimer of A, B and C subunits.

It carries out the reaction L-glutamyl-tRNA(Gln) + L-glutamine + ATP + H2O = L-glutaminyl-tRNA(Gln) + L-glutamate + ADP + phosphate + H(+). Allows the formation of correctly charged Gln-tRNA(Gln) through the transamidation of misacylated Glu-tRNA(Gln) in organisms which lack glutaminyl-tRNA synthetase. The reaction takes place in the presence of glutamine and ATP through an activated gamma-phospho-Glu-tRNA(Gln). In Rhizobium meliloti (strain 1021) (Ensifer meliloti), this protein is Glutamyl-tRNA(Gln) amidotransferase subunit A.